Reading from the N-terminus, the 315-residue chain is MSQPTVYIDGDQGTTGLLIHERLRGRIDLQLVTLPDAERKDPVRRAEAINAADIAILCLPDAAAREAVGFIRNPAVRVIDASSAHRTQPDWVYGFPEMANGHAQTIAHARRVTNPGCYPTGAIALLRPLQQAGLLPRDYPVSIHAVSGYSGGGRAAVDAFESGDASQAKPLQVYGLALAHKHVPEIQLHAGLTNRPMFVPAYGAYRQGIVLTVPIELRLLPAGVTGEQLHACLAHHYADARHVDVTPLADTQAITHLDPQALNGTNDMRLGVFVNAEHGQVLLSAVFDNLGKGASGAAVQNLDLMLGAADVAKAA.

The active site involves cysteine 117.

The protein belongs to the NAGSA dehydrogenase family. Type 2 subfamily.

The protein resides in the cytoplasm. The catalysed reaction is N-acetyl-L-glutamate 5-semialdehyde + phosphate + NADP(+) = N-acetyl-L-glutamyl 5-phosphate + NADPH + H(+). It participates in amino-acid biosynthesis; L-arginine biosynthesis; N(2)-acetyl-L-ornithine from L-glutamate: step 3/4. Its function is as follows. Catalyzes the NADPH-dependent reduction of N-acetyl-5-glutamyl phosphate to yield N-acetyl-L-glutamate 5-semialdehyde. In Burkholderia lata (strain ATCC 17760 / DSM 23089 / LMG 22485 / NCIMB 9086 / R18194 / 383), this protein is N-acetyl-gamma-glutamyl-phosphate reductase.